The sequence spans 347 residues: Olfactory receptor 13C3 (347 aa).

The Extracellular portion of the chain corresponds to 1–55; it reads MIVQLICTVCFLAVNTFHVRSSFDFLKADDMGEINQTLVSEFLLLGLSGYPKIEI. Residue N35 is glycosylated (N-linked (GlcNAc...) asparagine). The helical transmembrane segment at 56-76 threads the bilayer; that stretch reads VYFALILVMYLVILIGNGVLI. Residues 77–84 lie on the Cytoplasmic side of the membrane; sequence IASIFDSH. A helical transmembrane segment spans residues 85–105; it reads FHTPMYFFLGNLSFLDICYTS. Topologically, residues 106–129 are extracellular; that stretch reads SSVPSTLVSLISKKRNISFSGCAV. An intrachain disulfide couples C127 to C219. The helical transmembrane segment at 130–150 threads the bilayer; the sequence is QMFFGFAMGSTECLLLGMMAF. The Cytoplasmic portion of the chain corresponds to 151–169; that stretch reads DRYVAICNPLRYPIILSKV. A helical membrane pass occupies residues 170 to 190; the sequence is AYVLMASVSWLSGGINSAVQT. Residues 191–227 lie on the Extracellular side of the membrane; the sequence is LLAMRLPFCGNNIINHFACEILAVLKLACADISLNII. A helical transmembrane segment spans residues 228 to 247; sequence TMVISNMAFLVLPLMVIFFS. Topologically, residues 248-267 are cytoplasmic; the sequence is YMFILYTILQMNSATGRRKA. A helical membrane pass occupies residues 268–288; that stretch reads FSTCSAHLTVVIIFYGTIFFM. Residues 289 to 307 are Extracellular-facing; that stretch reads YAKPKSQDLIGEEKLQALD. A helical membrane pass occupies residues 308-328; sequence KLISLFYGVVTPMLNPILYSL. The Cytoplasmic segment spans residues 329–347; sequence RNKDVKAAVKYLLNKKPIH.

Belongs to the G-protein coupled receptor 1 family.

It localises to the cell membrane. In terms of biological role, odorant receptor. The protein is Olfactory receptor 13C3 (OR13C3) of Homo sapiens (Human).